A 274-amino-acid chain; its full sequence is Pre-rRNA-processing protein PNO1 (274 aa).

Residues 1-70 form a disordered region; the sequence is MVAPTALKKA…GSRKTHESKT (70 aa). The span at 33–48 shows a compositional bias: acidic residues; the sequence is SIDEDDDDDVLLDDSD. At S47 the chain carries Phosphoserine. T51 bears the Phosphothreonine mark. Positions 51–69 are enriched in basic and acidic residues; it reads TAKEEVEGEEGSRKTHESK. The KH domain maps to 195-247; it reads GDHLSRAIGRIAGKDGKTKFAIENATRTRIVLADSKIHILGGFTHIRMARESV.

It belongs to the PNO1 family. In terms of assembly, component of the small ribosomal subunit, ribosomal RNA processing complex (SSU RRP complex). Interacts with NOB1.

The protein localises to the cytoplasm. It localises to the nucleus. Its subcellular location is the nucleolus. In terms of biological role, required for small ribosomal subunit (SSU) synthesis. Has a role in the processing of early nucleolar and late cytoplasmic pre-RNA species. Recruits DIM1 to nucleolar pre-RNAs. Indirectly required for cleavage at the A2 site of the 20S pre-rRNA, forming 18S rRNA, and at A1 and A2 sites of other pre-rRNAs. This Saccharomyces cerevisiae (strain ATCC 204508 / S288c) (Baker's yeast) protein is Pre-rRNA-processing protein PNO1 (PNO1).